A 357-amino-acid chain; its full sequence is Meiotically up-regulated gene 135 protein (357 aa).

This sequence belongs to the UPF0612 family.

It localises to the nucleus. Its function is as follows. Has a role in meiosis. The sequence is that of Meiotically up-regulated gene 135 protein (mug135) from Schizosaccharomyces pombe (strain 972 / ATCC 24843) (Fission yeast).